A 224-amino-acid chain; its full sequence is Heme response regulator HssR (224 aa).

The Response regulatory domain maps to 3–116 (QCLVVDDDSR…ELIFRIRAVL (114 aa)). D52 carries the post-translational modification 4-aspartylphosphate. A DNA-binding region (ompR/PhoB-type) is located at residues 124–222 (NSEMTIGNLT…VRGQGYKVEN (99 aa)).

Phosphorylated by HssS.

It is found in the cytoplasm. Its function is as follows. Member of the two-component regulatory system HssS/HssR involved in intracellular heme homeostasis and tempering of staphylococcal virulence. Phosphorylated HssR binds to a direct repeat sequence within hrtAB promoter and activates the expression of hrtAB, an efflux pump, in response to extracellular heme, hemin, hemoglobin or blood. The protein is Heme response regulator HssR (hssR) of Staphylococcus aureus (strain bovine RF122 / ET3-1).